The chain runs to 151 residues: Aspartate 1-decarboxylase (151 aa).

Catalysis depends on Ser26, which acts as the Schiff-base intermediate with substrate; via pyruvic acid. Pyruvic acid (Ser) is present on Ser26. Thr58 contributes to the substrate binding site. Tyr59 functions as the Proton donor in the catalytic mechanism. 74 to 76 provides a ligand contact to substrate; the sequence is GGA.

The protein belongs to the PanD family. In terms of assembly, heterooctamer of four alpha and four beta subunits. The cofactor is pyruvate. Is synthesized initially as an inactive proenzyme, which is activated by self-cleavage at a specific serine bond to produce a beta-subunit with a hydroxyl group at its C-terminus and an alpha-subunit with a pyruvoyl group at its N-terminus.

The protein resides in the cytoplasm. It carries out the reaction L-aspartate + H(+) = beta-alanine + CO2. It participates in cofactor biosynthesis; (R)-pantothenate biosynthesis; beta-alanine from L-aspartate: step 1/1. Catalyzes the pyruvoyl-dependent decarboxylation of aspartate to produce beta-alanine. In Crocosphaera subtropica (strain ATCC 51142 / BH68) (Cyanothece sp. (strain ATCC 51142)), this protein is Aspartate 1-decarboxylase.